A 2517-amino-acid chain; its full sequence is Non-reducing polyketide synthase pkbA (2517 aa).

The N-terminal acylcarrier protein transacylase domain (SAT) stretch occupies residues 59-250; the sequence is LERVAGPAEK…KRFDLRGRFH (192 aa). Residues 380–775 form the Ketosynthase family 3 (KS3) domain; that stretch reads SEPIAIIGMG…SANTVSSLKE (396 aa). Active-site for beta-ketoacyl synthase activity residues include C547, H682, and H721. Residues 849–1158 are malonyl-CoA:ACP transacylase (MAT) domain; sequence AFGGQVARSV…TGTAALADAT (310 aa). The For acyl/malonyl transferase activity role is filled by S935. The interval 1221–1353 is N-terminal hotdog fold; sequence EEFLTFVKYK…GTVVLRENDT (133 aa). The 310-residue stretch at 1221–1530 folds into the PKS/mFAS DH domain; it reads EEFLTFVKYK…FTRVQISSLG (310 aa). A product template (PT) domain region spans residues 1251 to 1525; the sequence is FVKGHAVLAE…ILGAHFTRVQ (275 aa). The Proton acceptor; for dehydratase activity role is filled by H1255. The segment at 1379–1530 is C-terminal hotdog fold; it reads DCHILQGPVV…FTRVQISSLG (152 aa). The Proton donor; for dehydratase activity role is filled by D1437. In terms of domain architecture, Carrier 1 spans 1574-1651; sequence RPTLEISEKL…SISKCLASYL (78 aa). An O-(pantetheine 4'-phosphoryl)serine modification is found at S1611. Positions 1659 to 1684 are disordered; sequence QPEDLADADSVESDSDMPTGAVTSGI. A compositionally biased stretch (acidic residues) spans 1662–1673; it reads DLADADSVESDS. The region spanning 1685–1761 is the Carrier 2 domain; that stretch reads TTPDDAVSRL…DLIALVPALN (77 aa). O-(pantetheine 4'-phosphoryl)serine is present on S1721. A methyltransferase (CMeT) domain region spans residues 1976 to 2075; sequence LELGGGTGGT…IHRMLRPDGF (100 aa). The thioesterase (TE) domain stretch occupies residues 2200 to 2514; sequence LMIHGGGHIM…RGYDFLKEEV (315 aa).

Requires pantetheine 4'-phosphate as cofactor.

It carries out the reaction 3 malonyl-CoA + acetyl-CoA + S-adenosyl-L-methionine + H(+) = 3-methylorsellinate + S-adenosyl-L-homocysteine + 3 CO2 + 4 CoA. The protein operates within phytotoxin biosynthesis. Functionally, non-reducing polyketide synthase; part of the gene cluster that mediates the biosynthesis of cichorine, a phytotoxin active against knapweed, corn, and soybeans. The first step in the pathway is performed by the non-reducing polyketide synthase pkbA that condenses one acetyl-CoA starter unit with 3 malonyl-CoA units. PkbA also catalyzes one methylation step to produce 3-methylorsellinate. The nonribosomal peptide synthase-like protein cicB, the cytochrome P450 monooxygenase cicH and the O-methyltransferase cicE are involved in the conversion of 3-methylorsellinate into nidulol. CicB converts 3-methylorsellinate to a yet unidentified intermediate, cicH may play a ring-closing role for cichorine and cicE is plausibly responsible for the methylation of one of the phenol groups. The oxidoreductase cicC acts downstream with still unidentified enzymes to further convert nidulol into cichorin. This Emericella nidulans (strain FGSC A4 / ATCC 38163 / CBS 112.46 / NRRL 194 / M139) (Aspergillus nidulans) protein is Non-reducing polyketide synthase pkbA.